The following is a 513-amino-acid chain: Transmembrane protein 151B (513 aa).

The segment at 1–29 (MSPAAPVTESSAAEVHREQTDAPREPQRP) is disordered. Residues 14–28 (EVHREQTDAPREPQR) show a composition bias toward basic and acidic residues. Helical transmembrane passes span 46-66 (CLLL…CQVT), 93-113 (YIYI…VECW), and 274-294 (LPWY…LSWP). 3 N-linked (GlcNAc...) asparagine glycosylation sites follow: N366, N418, and N505.

This sequence belongs to the TMEM151 family.

It localises to the membrane. This is Transmembrane protein 151B (tmem151b) from Danio rerio (Zebrafish).